The following is a 268-amino-acid chain: L-aspartate dehydrogenase (268 aa).

Alanine 125 and asparagine 191 together coordinate NAD(+). The active site involves histidine 221.

This sequence belongs to the L-aspartate dehydrogenase family.

The catalysed reaction is L-aspartate + NADP(+) + H2O = oxaloacetate + NH4(+) + NADPH + H(+). It carries out the reaction L-aspartate + NAD(+) + H2O = oxaloacetate + NH4(+) + NADH + H(+). It participates in cofactor biosynthesis; NAD(+) biosynthesis; iminoaspartate from L-aspartate (dehydrogenase route): step 1/1. Functionally, specifically catalyzes the NAD or NADP-dependent dehydrogenation of L-aspartate to iminoaspartate. The polypeptide is L-aspartate dehydrogenase (Brucella anthropi (strain ATCC 49188 / DSM 6882 / CCUG 24695 / JCM 21032 / LMG 3331 / NBRC 15819 / NCTC 12168 / Alc 37) (Ochrobactrum anthropi)).